The following is a 352-amino-acid chain: Glycogen synthase kinase 3 (352 aa).

A Protein kinase domain is found at Y20–F310. Residues A26–V34 and K49 contribute to the ATP site. The Proton acceptor role is filled by D152.

Belongs to the protein kinase superfamily. CMGC Ser/Thr protein kinase family. GSK-3 subfamily. In terms of assembly, inhibited by cyclin kinase 2 (CDK2) inhibitors, including GW8510.

It catalyses the reaction L-seryl-[tau protein] + ATP = O-phospho-L-seryl-[tau protein] + ADP + H(+). It carries out the reaction L-threonyl-[tau protein] + ATP = O-phospho-L-threonyl-[tau protein] + ADP + H(+). The polypeptide is Glycogen synthase kinase 3 (Trypanosoma brucei brucei (strain 927/4 GUTat10.1)).